The following is a 56-amino-acid chain: Sex-specific storage protein 1 (56 aa).

It belongs to the hemocyanin family. Expressed in fat body and ovary.

It is found in the secreted. Larval storage protein (LSP) which may serve as a store of amino acids for synthesis of adult proteins. The biosynthesis, accumulation and sequestration of storage protein-1 takes place during metamorphosis and saves energy for the non-feeding pupal stage. May also be essential for egg formation. This Amsacta albistriga (Red hairy caterpillar) protein is Sex-specific storage protein 1.